The primary structure comprises 496 residues: Beta-amylase (496 aa).

Asp54, His94, and Asp102 together coordinate substrate. Residue Glu187 is the Proton donor of the active site. Substrate-binding residues include Lys296, His301, and Thr343. The Proton acceptor role is filled by Glu381. Residues 382–383 and Arg421 contribute to the substrate site; that span reads NA.

Belongs to the glycosyl hydrolase 14 family.

The catalysed reaction is Hydrolysis of (1-&gt;4)-alpha-D-glucosidic linkages in polysaccharides so as to remove successive maltose units from the non-reducing ends of the chains.. The protein is Beta-amylase (BMY1) of Vigna unguiculata (Cowpea).